Here is a 231-residue protein sequence, read N- to C-terminus: Lipoprotein-releasing system ATP-binding protein LolD (231 aa).

The 222-residue stretch at 9 to 230 (FSLKDVGKEY…LRAGELYDQN (222 aa)) folds into the ABC transporter domain. Residue 45–52 (GASGSGKS) participates in ATP binding.

This sequence belongs to the ABC transporter superfamily. Lipoprotein translocase (TC 3.A.1.125) family. In terms of assembly, the complex is composed of two ATP-binding proteins (LolD) and two transmembrane proteins (LolC and LolE).

It localises to the cell inner membrane. In terms of biological role, part of the ABC transporter complex LolCDE involved in the translocation of mature outer membrane-directed lipoproteins, from the inner membrane to the periplasmic chaperone, LolA. Responsible for the formation of the LolA-lipoprotein complex in an ATP-dependent manner. This Oleidesulfovibrio alaskensis (strain ATCC BAA-1058 / DSM 17464 / G20) (Desulfovibrio alaskensis) protein is Lipoprotein-releasing system ATP-binding protein LolD.